The primary structure comprises 345 residues: UDP-N-acetylenolpyruvoylglucosamine reductase (345 aa).

The 171-residue stretch at 27–197 (FDASAELAYE…TKVVFKLPKQ (171 aa)) folds into the FAD-binding PCMH-type domain. The active site involves arginine 174. Serine 245 (proton donor) is an active-site residue. Residue glutamate 341 is part of the active site.

It belongs to the MurB family. Requires FAD as cofactor.

It is found in the cytoplasm. The enzyme catalyses UDP-N-acetyl-alpha-D-muramate + NADP(+) = UDP-N-acetyl-3-O-(1-carboxyvinyl)-alpha-D-glucosamine + NADPH + H(+). The protein operates within cell wall biogenesis; peptidoglycan biosynthesis. Cell wall formation. This Polynucleobacter asymbioticus (strain DSM 18221 / CIP 109841 / QLW-P1DMWA-1) (Polynucleobacter necessarius subsp. asymbioticus) protein is UDP-N-acetylenolpyruvoylglucosamine reductase.